The following is a 421-amino-acid chain: UDP-N-acetylglucosamine 1-carboxyvinyltransferase (421 aa).

22–23 (KN) contacts phosphoenolpyruvate. Arg93 serves as a coordination point for UDP-N-acetyl-alpha-D-glucosamine. Catalysis depends on Cys117, which acts as the Proton donor. 2-(S-cysteinyl)pyruvic acid O-phosphothioketal is present on Cys117. UDP-N-acetyl-alpha-D-glucosamine is bound by residues 122–126 (RPVDL), Asp308, and Val330.

This sequence belongs to the EPSP synthase family. MurA subfamily.

The protein resides in the cytoplasm. It carries out the reaction phosphoenolpyruvate + UDP-N-acetyl-alpha-D-glucosamine = UDP-N-acetyl-3-O-(1-carboxyvinyl)-alpha-D-glucosamine + phosphate. It functions in the pathway cell wall biogenesis; peptidoglycan biosynthesis. In terms of biological role, cell wall formation. Adds enolpyruvyl to UDP-N-acetylglucosamine. This chain is UDP-N-acetylglucosamine 1-carboxyvinyltransferase, found in Stutzerimonas stutzeri (strain A1501) (Pseudomonas stutzeri).